A 67-amino-acid polypeptide reads, in one-letter code: ATP synthase F(0) complex subunit 8 (67 aa).

The chain crosses the membrane as a helical span at residues 8–24; the sequence is TWLIMILSMILTLFITF. An N6-acetyllysine; alternate modification is found at lysine 54. At lysine 54 the chain carries N6-succinyllysine; alternate. An N6-acetyllysine modification is found at lysine 57.

This sequence belongs to the ATPase protein 8 family. In terms of assembly, component of the ATP synthase complex composed at least of ATP5F1A/subunit alpha, ATP5F1B/subunit beta, ATP5MC1/subunit c (homooctomer), MT-ATP6/subunit a, MT-ATP8/subunit 8, ATP5ME/subunit e, ATP5MF/subunit f, ATP5MG/subunit g, ATP5MK/subunit k, ATP5MJ/subunit j, ATP5F1C/subunit gamma, ATP5F1D/subunit delta, ATP5F1E/subunit epsilon, ATP5PF/subunit F6, ATP5PB/subunit b, ATP5PD/subunit d, ATP5PO/subunit OSCP. ATP synthase complex consists of a soluble F(1) head domain (subunits alpha(3) and beta(3)) - the catalytic core - and a membrane F(0) domain - the membrane proton channel (subunits c, a, 8, e, f, g, k and j). These two domains are linked by a central stalk (subunits gamma, delta, and epsilon) rotating inside the F1 region and a stationary peripheral stalk (subunits F6, b, d, and OSCP). Interacts with PRICKLE3.

It localises to the mitochondrion membrane. In terms of biological role, subunit 8, of the mitochondrial membrane ATP synthase complex (F(1)F(0) ATP synthase or Complex V) that produces ATP from ADP in the presence of a proton gradient across the membrane which is generated by electron transport complexes of the respiratory chain. ATP synthase complex consist of a soluble F(1) head domain - the catalytic core - and a membrane F(1) domain - the membrane proton channel. These two domains are linked by a central stalk rotating inside the F(1) region and a stationary peripheral stalk. During catalysis, ATP synthesis in the catalytic domain of F(1) is coupled via a rotary mechanism of the central stalk subunits to proton translocation. In vivo, can only synthesize ATP although its ATP hydrolase activity can be activated artificially in vitro. Part of the complex F(0) domain. This is ATP synthase F(0) complex subunit 8 from Phoca vitulina (Harbor seal).